The following is a 233-amino-acid chain: MREHRPIIALDFPSFEAVKEFLALFPAEESLYLKVGMELYYAAGPEIVSYLKGLGHSVFLDLKLHDIPNTVKSAMKILSQLGVDMTNVHAAGGVEMMKAAREGLGSQAKLIAVTQLTSTSEAQMQEFQNIQTSLQESVIHYAKKTAEAGLDGVVCSAQEVQVIKQATNPDFICLTPGIRPAGVAVGDQKRVMTPADAYQIGSDYIVVGRPITQAEDPVAAYHAIKDEWTQDWN.

Substrate-binding positions include D11, K34, 61–70 (DLKLHDIPNT), T117, R179, Q188, G208, and R209. K63 acts as the Proton donor in catalysis.

It belongs to the OMP decarboxylase family. Type 1 subfamily. As to quaternary structure, homodimer.

It carries out the reaction orotidine 5'-phosphate + H(+) = UMP + CO2. Its pathway is pyrimidine metabolism; UMP biosynthesis via de novo pathway; UMP from orotate: step 2/2. In terms of biological role, catalyzes the decarboxylation of orotidine 5'-monophosphate (OMP) to uridine 5'-monophosphate (UMP). The chain is Orotidine 5'-phosphate decarboxylase from Streptococcus pneumoniae serotype 4 (strain ATCC BAA-334 / TIGR4).